Consider the following 191-residue polypeptide: IMP cyclohydrolase (191 aa).

The protein belongs to the archaeal IMP cyclohydrolase family.

It carries out the reaction IMP + H2O = 5-formamido-1-(5-phospho-D-ribosyl)imidazole-4-carboxamide. It participates in purine metabolism; IMP biosynthesis via de novo pathway; IMP from 5-formamido-1-(5-phospho-D-ribosyl)imidazole-4-carboxamide: step 1/1. Catalyzes the cyclization of 5-formylamidoimidazole-4-carboxamide ribonucleotide to IMP. In Natronomonas pharaonis (strain ATCC 35678 / DSM 2160 / CIP 103997 / JCM 8858 / NBRC 14720 / NCIMB 2260 / Gabara) (Halobacterium pharaonis), this protein is IMP cyclohydrolase.